A 1741-amino-acid chain; its full sequence is Meiosis regulator and mRNA stability factor 1 (1741 aa).

The region spanning 345–482 is the NYN domain; that stretch reads IGVFWDIENC…ALLHHAHELV (138 aa). Disordered stretches follow at residues 594–636, 659–678, and 683–716; these read KVKS…GSVI, TENH…SHAA, and LTTK…PVDK. Residues 659 to 668 show a composition bias toward basic and acidic residues; that stretch reads TENHQEHLRE. The region spanning 788–867 is the RRM domain; the sequence is ADIQISNIDY…KRIQVSLATG (80 aa). HTH OST-type domains follow at residues 872-946, 1000-1076, 1097-1171, 1173-1248, 1257-1332, 1333-1408, 1409-1483, and 1484-1558; these read SLSL…SPLG, SLKT…HNKP, QLIQ…LTHR, QVKR…IPKR, RTKQ…TEVE, QVKA…INRK, SLRT…VRLT, and NLYM…LKND. Residues 1684 to 1700 are compositionally biased toward polar residues; that stretch reads KLTSGSVASSTAENTSV. The disordered stretch occupies residues 1684–1727; that stretch reads KLTSGSVASSTAENTSVPPRHSSETQLNKEAMDSPAKKQHKNKV.

The protein localises to the peroxisome. In terms of biological role, essential regulator of oogenesis required for female meiotic progression to repress transposable elements and preventing their mobilization, which is essential for the germline integrity. The chain is Meiosis regulator and mRNA stability factor 1 from Gallus gallus (Chicken).